A 148-amino-acid polypeptide reads, in one-letter code: Large-conductance mechanosensitive channel (148 aa).

Transmembrane regions (helical) follow at residues 12–32 (AFAMKGNVIDMAVGVVIGGAF) and 85–105 (GQFLQATFDFLIIAFAIFLFI).

The protein belongs to the MscL family. As to quaternary structure, homopentamer.

It is found in the cell inner membrane. Functionally, channel that opens in response to stretch forces in the membrane lipid bilayer. May participate in the regulation of osmotic pressure changes within the cell. The sequence is that of Large-conductance mechanosensitive channel from Bacteroides thetaiotaomicron (strain ATCC 29148 / DSM 2079 / JCM 5827 / CCUG 10774 / NCTC 10582 / VPI-5482 / E50).